The chain runs to 144 residues: Small ribosomal subunit protein bS6 (144 aa).

The segment at 92-144 (KVDGHDEGPSVQMQKRDDRGDREERGDRGDRGDRGPRGDRGPREDRGPRPERR) is disordered. Basic and acidic residues predominate over residues 93–144 (VDGHDEGPSVQMQKRDDRGDREERGDRGDRGDRGPRGDRGPREDRGPRPERR).

Belongs to the bacterial ribosomal protein bS6 family.

Binds together with bS18 to 16S ribosomal RNA. The polypeptide is Small ribosomal subunit protein bS6 (rpsF) (Rhodobacter capsulatus (strain ATCC BAA-309 / NBRC 16581 / SB1003)).